The following is a 148-amino-acid chain: Protein MGF 360-18R (148 aa).

This sequence belongs to the asfivirus MGF 360 family.

In terms of biological role, plays a role in virus cell tropism, and may be required for efficient virus replication in macrophages. This is Protein MGF 360-18R from African swine fever virus (strain Badajoz 1971 Vero-adapted) (Ba71V).